A 222-amino-acid chain; its full sequence is Adenylate kinase, chloroplastic (222 aa).

15-20 (ASGKGT) contributes to the ATP binding site. The NMP stretch occupies residues 35–64 (SAGDLLRAEIAAGSENGKRAKEFMEKGQLV). AMP is bound by residues Arg41, 62 to 64 (QLV), 91 to 94 (GYPR), and Gln98. Positions 128-161 (GRRLDPVTGKIYHLKYSPPENEEIASRLTQRFDD) are LID. Arg129 is an ATP binding site. An AMP-binding site is contributed by Arg158. Residue Ala195 participates in ATP binding.

As to quaternary structure, monomer.

It localises to the plastid. It is found in the chloroplast. The catalysed reaction is AMP + ATP = 2 ADP. In terms of biological role, catalyzes the reversible transfer of the terminal phosphate group between ATP and AMP. Plays an important role in cellular energy homeostasis and in adenine nucleotide metabolism. The maize enzyme also works with CMP, albeit with 10% of the activity with AMP. The protein is Adenylate kinase, chloroplastic (ADK1) of Zea mays (Maize).